The primary structure comprises 142 residues: MAKKVQAYVKLQVAAGMANPSPPVGPALGQQGVNIMEFCKAFNARTESIEKGLPIPVVITVYADRSFTFVTKTPPAAVLLKKAAGIKSGSGKPNKDKVGKVTQDQIRQIAETKAADMTGATIETKMKSIAGTARSMGLVVEE.

The protein belongs to the universal ribosomal protein uL11 family. Part of the ribosomal stalk of the 50S ribosomal subunit. Interacts with L10 and the large rRNA to form the base of the stalk. L10 forms an elongated spine to which L12 dimers bind in a sequential fashion forming a multimeric L10(L12)X complex. In terms of processing, one or more lysine residues are methylated.

Forms part of the ribosomal stalk which helps the ribosome interact with GTP-bound translation factors. The polypeptide is Large ribosomal subunit protein uL11 (Actinobacillus succinogenes (strain ATCC 55618 / DSM 22257 / CCUG 43843 / 130Z)).